Here is a 199-residue protein sequence, read N- to C-terminus: Shikimate kinase (199 aa).

14 to 19 (GSGKST) lines the ATP pocket. Serine 18 lines the Mg(2+) pocket. Positions 36, 60, and 82 each coordinate substrate. Arginine 120 serves as a coordination point for ATP. Arginine 147 lines the substrate pocket. The interval 179-199 (YVRRAEKNQNSHSQTKKQSRK) is disordered.

The protein belongs to the shikimate kinase family. Monomer. The cofactor is Mg(2+).

The protein localises to the cytoplasm. The catalysed reaction is shikimate + ATP = 3-phosphoshikimate + ADP + H(+). The protein operates within metabolic intermediate biosynthesis; chorismate biosynthesis; chorismate from D-erythrose 4-phosphate and phosphoenolpyruvate: step 5/7. Catalyzes the specific phosphorylation of the 3-hydroxyl group of shikimic acid using ATP as a cosubstrate. This chain is Shikimate kinase, found in Chlorobium phaeobacteroides (strain BS1).